The following is a 368-amino-acid chain: Spermidine/putrescine import ATP-binding protein PotA (368 aa).

Positions 8–238 (IELRGVTKNF…PANLYVARFV (231 aa)) constitute an ABC transporter domain. Residue 40–47 (GPSGCGKT) participates in ATP binding.

Belongs to the ABC transporter superfamily. Spermidine/putrescine importer (TC 3.A.1.11.1) family. As to quaternary structure, the complex is composed of two ATP-binding proteins (PotA), two transmembrane proteins (PotB and PotC) and a solute-binding protein (PotD).

Its subcellular location is the cell inner membrane. It carries out the reaction ATP + H2O + polyamine-[polyamine-binding protein]Side 1 = ADP + phosphate + polyamineSide 2 + [polyamine-binding protein]Side 1.. Part of the ABC transporter complex PotABCD involved in spermidine/putrescine import. Responsible for energy coupling to the transport system. This Nitratidesulfovibrio vulgaris (strain ATCC 29579 / DSM 644 / CCUG 34227 / NCIMB 8303 / VKM B-1760 / Hildenborough) (Desulfovibrio vulgaris) protein is Spermidine/putrescine import ATP-binding protein PotA.